The primary structure comprises 379 residues: NADH-quinone oxidoreductase subunit D 1 (379 aa).

This sequence belongs to the complex I 49 kDa subunit family. As to quaternary structure, NDH-1 is composed of 14 different subunits. Subunits NuoB, C, D, E, F, and G constitute the peripheral sector of the complex.

It localises to the cell inner membrane. It carries out the reaction a quinone + NADH + 5 H(+)(in) = a quinol + NAD(+) + 4 H(+)(out). NDH-1 shuttles electrons from NADH, via FMN and iron-sulfur (Fe-S) centers, to quinones in the respiratory chain. The immediate electron acceptor for the enzyme in this species is believed to be ubiquinone. Couples the redox reaction to proton translocation (for every two electrons transferred, four hydrogen ions are translocated across the cytoplasmic membrane), and thus conserves the redox energy in a proton gradient. The polypeptide is NADH-quinone oxidoreductase subunit D 1 (Anaeromyxobacter sp. (strain K)).